The primary structure comprises 193 residues: Potassium-transporting ATPase KdpC subunit (193 aa).

A helical membrane pass occupies residues 14 to 34 (ITFTFLVLCGLVYPLIVTGIA).

This sequence belongs to the KdpC family. In terms of assembly, the system is composed of three essential subunits: KdpA, KdpB and KdpC.

It localises to the cell membrane. Its function is as follows. Part of the high-affinity ATP-driven potassium transport (or Kdp) system, which catalyzes the hydrolysis of ATP coupled with the electrogenic transport of potassium into the cytoplasm. This subunit acts as a catalytic chaperone that increases the ATP-binding affinity of the ATP-hydrolyzing subunit KdpB by the formation of a transient KdpB/KdpC/ATP ternary complex. The polypeptide is Potassium-transporting ATPase KdpC subunit (Bacillus anthracis (strain A0248)).